The following is a 149-amino-acid chain: Large ribosomal subunit protein uL11 (149 aa).

Belongs to the universal ribosomal protein uL11 family. Part of the ribosomal stalk of the 50S ribosomal subunit. Interacts with L10 and the large rRNA to form the base of the stalk. L10 forms an elongated spine to which L12 dimers bind in a sequential fashion forming a multimeric L10(L12)X complex. Post-translationally, one or more lysine residues are methylated.

In terms of biological role, forms part of the ribosomal stalk which helps the ribosome interact with GTP-bound translation factors. This Methylobacterium radiotolerans (strain ATCC 27329 / DSM 1819 / JCM 2831 / NBRC 15690 / NCIMB 10815 / 0-1) protein is Large ribosomal subunit protein uL11.